A 145-amino-acid polypeptide reads, in one-letter code: MLTVLQRVKEARVDIDGQTVGKINHGLLILCGFEPNDSLENIKRMLDKCINYRIFEDPSGKMNLSLKDVNGGLLLVPQFTLMADTQKGLRPSFSNAASPELGRELFDNLLTLAQKCHQNTQSGCFGANMQVYLCNDGPVTFLLQF.

Positions 137–138 (GP) match the Gly-cisPro motif, important for rejection of L-amino acids motif.

Belongs to the DTD family. Homodimer.

Its subcellular location is the cytoplasm. It carries out the reaction glycyl-tRNA(Ala) + H2O = tRNA(Ala) + glycine + H(+). The enzyme catalyses a D-aminoacyl-tRNA + H2O = a tRNA + a D-alpha-amino acid + H(+). In terms of biological role, an aminoacyl-tRNA editing enzyme that deacylates mischarged D-aminoacyl-tRNAs. Also deacylates mischarged glycyl-tRNA(Ala), protecting cells against glycine mischarging by AlaRS. Acts via tRNA-based rather than protein-based catalysis; rejects L-amino acids rather than detecting D-amino acids in the active site. By recycling D-aminoacyl-tRNA to D-amino acids and free tRNA molecules, this enzyme counteracts the toxicity associated with the formation of D-aminoacyl-tRNA entities in vivo and helps enforce protein L-homochirality. The chain is D-aminoacyl-tRNA deacylase from Legionella pneumophila (strain Lens).